We begin with the raw amino-acid sequence, 267 residues long: Tryptophan synthase alpha chain (267 aa).

Active-site proton acceptor residues include glutamate 44 and aspartate 55.

It belongs to the TrpA family. Tetramer of two alpha and two beta chains.

It carries out the reaction (1S,2R)-1-C-(indol-3-yl)glycerol 3-phosphate + L-serine = D-glyceraldehyde 3-phosphate + L-tryptophan + H2O. It participates in amino-acid biosynthesis; L-tryptophan biosynthesis; L-tryptophan from chorismate: step 5/5. Functionally, the alpha subunit is responsible for the aldol cleavage of indoleglycerol phosphate to indole and glyceraldehyde 3-phosphate. The chain is Tryptophan synthase alpha chain from Coxiella burnetii (strain Dugway 5J108-111).